A 316-amino-acid polypeptide reads, in one-letter code: Adenine deaminase (316 aa).

Residues His-14, His-16, and His-194 each coordinate Zn(2+). The Proton donor role is filled by Glu-197. A Zn(2+)-binding site is contributed by Asp-275. Substrate is bound at residue Asp-276.

The protein belongs to the metallo-dependent hydrolases superfamily. Adenosine and AMP deaminases family. Adenine deaminase type 2 subfamily. The cofactor is Zn(2+).

The catalysed reaction is adenine + H2O + H(+) = hypoxanthine + NH4(+). In terms of biological role, catalyzes the hydrolytic deamination of adenine to hypoxanthine. Plays an important role in the purine salvage pathway and in nitrogen catabolism. The protein is Adenine deaminase of Bordetella avium (strain 197N).